The following is a 473-amino-acid chain: MQVTEINAQGLKREFQVLLAAQELEERLTNELSGMKDKVQLKGFRPGKVPVAHLRKVYGRSVMAEVVQNAVNEANRQIVTDNGLKLALEPQVEFPTDQAEVEKALDAKGDLAFKVALEVMPSFELADLSDVSLTKLVAKPSDAEVDEALDRMAGQSRPFTEREEGAEAQSGDRVTIDFVGRIDGEEFQGGKGEGIDLELGSGSFIPGFEDQLVGAKVGDKRLVKVTFPESYGAEHLAGKDAEFDVTVTKIQAAGEAKIDDEFAKSMGMESLEKLREAVSEAIGRDFEAASRRRLKKELLDALDGKYAFELPPSLVAQEFAAVWAQVEQDLKTRGKTFEDEDTTEEKAQAEYRKIAERRVRLGLVLAQVGESADIKVSDEEVNQALIARVRQFPGQEQQVWDFYRKNAQALAELRAPLFEEKVVDHVLGQVKLVEEPVSKEALFADEDGDDTTGGKPADKAEAKDESKTEAKAD.

One can recognise a PPIase FKBP-type domain in the interval 171–256; that stretch reads GDRVTIDFVG…VTKIQAAGEA (86 aa). The segment at 439–473 is disordered; sequence KEALFADEDGDDTTGGKPADKAEAKDESKTEAKAD. The segment covering 456-473 has biased composition (basic and acidic residues); sequence PADKAEAKDESKTEAKAD.

It belongs to the FKBP-type PPIase family. Tig subfamily.

It localises to the cytoplasm. The enzyme catalyses [protein]-peptidylproline (omega=180) = [protein]-peptidylproline (omega=0). In terms of biological role, involved in protein export. Acts as a chaperone by maintaining the newly synthesized protein in an open conformation. Functions as a peptidyl-prolyl cis-trans isomerase. The chain is Trigger factor from Methylobacterium radiotolerans (strain ATCC 27329 / DSM 1819 / JCM 2831 / NBRC 15690 / NCIMB 10815 / 0-1).